The following is a 980-amino-acid chain: Ankycorbin (980 aa).

N-acetylmethionine is present on M1. At S11 the chain carries Phosphoserine. ANK repeat units follow at residues 18-51 (KNDD…KHDS), 52-81 (EGKT…DVTA), 85-114 (TGHS…PAES), 118-147 (SGKT…PINL), 151-180 (DGNI…DVNS), 184-213 (SGRT…DLNL), and 217-247 (LGYN…DADL). Residues 247 to 259 (LKTPTKPKQHDQV) show a composition bias toward basic and acidic residues. The segment at 247–301 (LKTPTKPKQHDQVSKISSERSGTPKKRKAPPPPISPTQLSDVSSPRSITSTPLSG) is disordered. T249 carries the phosphothreonine modification. Residues 270–276 (PKKRKAP) carry the Nuclear localization signal motif. 3 positions are modified to phosphoserine: S281, S286, and S293. A compositionally biased stretch (polar residues) spans 282–299 (PTQLSDVSSPRSITSTPL). Residues T295 and T297 each carry the phosphothreonine modification. Phosphoserine is present on residues S300, S304, S318, S327, S329, S340, S341, S350, S358, S419, S512, S515, S667, and S915. Positions 349-374 (LSLLQAKVASLTLHNKELQDKLQAKS) form a coiled coil. Residues 387–423 (YHSTQTDLGPSLGKPGETSPPDSKSSPSVLIHSLGKS) form a disordered region. Residues 425–947 (TDNDVRIQQL…QHQEVISVYR (523 aa)) are a coiled coil.

In terms of assembly, interacts with PALLD. Associates with actin. However, does not bind F-actin directly. Highly expressed in placenta, muscle, kidney and testis. Moderately expressed in heart, brain, lung, liver and intestine. Isoform 2 is widely expressed and expressed in fetal and adult testes, and spermatozoa.

It is found in the cytoplasm. The protein localises to the cytoskeleton. Its subcellular location is the stress fiber. It localises to the cell cortex. The protein resides in the cell junction. It is found in the nucleus. Functionally, plays a role in actin regulation at the ectoplasmic specialization, a type of cell junction specific to testis. Important for establishment of sperm polarity and normal spermatid adhesion. May also promote integrity of Sertoli cell tight junctions at the blood-testis barrier. This is Ankycorbin (RAI14) from Homo sapiens (Human).